The sequence spans 197 residues: Rac-like GTP-binding protein RHO1 (197 aa).

13–20 (GDGAVGKT) contacts GTP. The short motif at 35-43 (YVPTVFDNF) is the Effector region element. Residues 60-64 (DTAGQ) and 118-121 (TKLD) contribute to the GTP site. Cysteine 194 is subject to Cysteine methyl ester. Cysteine 194 is lipidated: S-geranylgeranyl cysteine. A propeptide spans 195–197 (SIL) (removed in mature form).

Belongs to the small GTPase superfamily. Rho family.

The protein localises to the cytoplasm. It localises to the membrane. Inactive GDP-bound Rho GTPases reside in the cytosol, are found in a complex with Rho GDP-dissociation inhibitors (Rho GDIs), and are released from the GDI protein in order to translocate to membranes upon activation. In Beta vulgaris (Sugar beet), this protein is Rac-like GTP-binding protein RHO1 (RHO1).